Reading from the N-terminus, the 156-residue chain is MIKKNRDAEVYALGQHICMSAHKARRVIDQIRGRSYEEALMILELMPYRACYPIFKLVYSAAANASHNMGFNEADSVISKAEVNDGTSVKKLKPRARGRSYLIKRPTCHITIVLKDIYLDEKYIIWLRKYGWIYRNKYTDMTCRDMYGSGGVWDKK.

Belongs to the universal ribosomal protein uL22 family. Part of the 50S ribosomal subunit.

It localises to the plastid. The protein localises to the chloroplast. This protein binds specifically to 23S rRNA. Its function is as follows. The globular domain of the protein is located near the polypeptide exit tunnel on the outside of the subunit, while an extended beta-hairpin is found that lines the wall of the exit tunnel in the center of the 70S ribosome. The polypeptide is Large ribosomal subunit protein uL22c (rpl22) (Buxus microphylla (Littleleaf boxwood)).